A 272-amino-acid polypeptide reads, in one-letter code: Streptomycin 3''-kinase (272 aa).

Catalysis depends on Asp-190, which acts as the Proton acceptor.

The protein belongs to the aminoglycoside phosphotransferase family.

The catalysed reaction is streptomycin + ATP = streptomycin 3''-phosphate + ADP + H(+). Its function is as follows. The aminoglycoside phosphotransferases achieve inactivation of their antibiotic substrates by phosphorylation. This is Streptomycin 3''-kinase (aphE) from Streptomyces griseus.